Reading from the N-terminus, the 250-residue chain is Electron transport regulator A (250 aa).

Positions 164 to 237 (KNAEERLAAF…GKYIIIVDHH (74 aa)) constitute an HTH crp-type domain. The segment at residues 197–216 (RGDIGNYLGLTVETISRLLG) is a DNA-binding region (H-T-H motif).

Monomer.

In terms of biological role, regulates anaerobic growth on fumarate, nitrite, Fe(3+), TMAO, DMSO, thiosulfate and sulfite, but not on nitrate nor Mn(4+). This chain is Electron transport regulator A (etrA), found in Shewanella oneidensis (strain ATCC 700550 / JCM 31522 / CIP 106686 / LMG 19005 / NCIMB 14063 / MR-1).